The following is a 673-amino-acid chain: F420-dependent formate dehydrogenase subunit alpha (673 aa).

Positions Phe3–Asp59 constitute a 4Fe-4S Mo/W bis-MGD-type domain. [4Fe-4S] cluster is bound by residues Cys10, Cys13, Cys17, and Cys45. Position 131 (Sec131) is a non-standard amino acid, selenocysteine.

It belongs to the prokaryotic molybdopterin-containing oxidoreductase family. Dimer of an alpha (FdhA) and a beta (FdhB) subunit. [4Fe-4S] cluster serves as cofactor. The cofactor is Mo-bis(molybdopterin guanine dinucleotide). It depends on Zn(2+) as a cofactor.

The catalysed reaction is oxidized coenzyme F420-(gamma-L-Glu)(n) + formate + 2 H(+) = reduced coenzyme F420-(gamma-L-Glu)(n) + CO2. Its function is as follows. Catalyzes the oxidation of formate to carbon dioxide, with coenzyme F420 as the electron acceptor. The sequence is that of F420-dependent formate dehydrogenase subunit alpha (fdhA) from Methanocaldococcus jannaschii (strain ATCC 43067 / DSM 2661 / JAL-1 / JCM 10045 / NBRC 100440) (Methanococcus jannaschii).